The chain runs to 263 residues: MPEGPEIRRAADNLEAAIKGKPLTDVWFAFAQLKPYESQLTGQLVTRIETRGKALLTHFSNGLTLYSHNQLYGVWRVIDTGEIPQTTRILRVRLQTADKIILLYSASDIEMLTAEQLMTHPFLQRVGPDVLDARLTPEEVKARLLSPRFRNRQFSGLLLDQSFLAGLGNYLRVEILWQVGLTGQHKAKDLNEAQLNALSHALLDIPRLSYTTRGQADENKHHGALFRFKVFHRDGEACERCGGIIEKTTLSSRPFYWCAHCQK.

P2 functions as the Schiff-base intermediate with DNA in the catalytic mechanism. The active-site Proton donor is the E3. The Proton donor; for beta-elimination activity role is filled by K53. 3 residues coordinate DNA: Q70, R125, and N169. The segment at 229 to 263 adopts an FPG-type zinc-finger fold; the sequence is KVFHRDGEACERCGGIIEKTTLSSRPFYWCAHCQK. R253 functions as the Proton donor; for delta-elimination activity in the catalytic mechanism.

Belongs to the FPG family. Requires Zn(2+) as cofactor.

The catalysed reaction is 2'-deoxyribonucleotide-(2'-deoxyribose 5'-phosphate)-2'-deoxyribonucleotide-DNA = a 3'-end 2'-deoxyribonucleotide-(2,3-dehydro-2,3-deoxyribose 5'-phosphate)-DNA + a 5'-end 5'-phospho-2'-deoxyribonucleoside-DNA + H(+). In terms of biological role, involved in base excision repair of DNA damaged by oxidation or by mutagenic agents. Acts as a DNA glycosylase that recognizes and removes damaged bases. Has a preference for oxidized pyrimidines, such as thymine glycol, 5,6-dihydrouracil and 5,6-dihydrothymine. Has AP (apurinic/apyrimidinic) lyase activity and introduces nicks in the DNA strand. Cleaves the DNA backbone by beta-delta elimination to generate a single-strand break at the site of the removed base with both 3'- and 5'-phosphates. This Salmonella typhi protein is Endonuclease 8.